The chain runs to 229 residues: UPF0758 protein MA_1979 (229 aa).

Residues 106–228 (KICSPKDVYA…YVSLKDEGFV (123 aa)) enclose the MPN domain. Residues H177, H179, and D190 each contribute to the Zn(2+) site. Residues 177–190 (HNHPSGDPSPSRED) carry the JAMM motif motif.

This sequence belongs to the UPF0758 family.

In Methanosarcina acetivorans (strain ATCC 35395 / DSM 2834 / JCM 12185 / C2A), this protein is UPF0758 protein MA_1979.